Reading from the N-terminus, the 431-residue chain is Keratin, type I cytoskeletal 18 (431 aa).

The segment at 2–83 (SLRTSYSVRS…SGSTGEIMGN (82 aa)) is head. Serine 12 is modified (phosphoserine). Threonine 13 carries the phosphothreonine modification. Serine 22 and serine 36 each carry phosphoserine. Residues 84–119 (EKMAMQNLNDRLASYLEKVRILEQANSKLELKIREA) are coil 1A. Positions 84–395 (EKMAMQNLND…RLLDGGDFKL (312 aa)) constitute an IF rod domain. Residues 120–136 (LEKRGPDVHDYSRFQPI) are linker 1. The segment at 137 to 228 (VDELRKKIFD…KNHDNEVMEL (92 aa)) is coil 1B. The linker 12 stretch occupies residues 229–252 (RNQISQSGVQVDVDAPKGQDLSQI). A coil 2 region spans residues 253-390 (MEEIRAKYEK…IATYRRLLDG (138 aa)). Residues 391 to 431 (GDFKLQDALEEQKKVKVMTVTQTLVDGKVVSSSTETKERKL) are tail.

Belongs to the intermediate filament family. Heterotetramer of two type I and two type II keratins. Keratin-18 associates with keratin-8. Post-translationally, proteolytically cleaved by caspases during epithelial cell apoptosis. As to expression, expressed in simple epithelia such as intestinal mucosa, bile duct, hepatocytes, renal tubules, endothelia, ocular lens epithelium, and in a variety of mesenchymally-derived cells such as blood vessel endothelia, pillar gill cells, optic nerve glial cells, fibroblasts, interstitial cells, chondrocytes and ovarian theca cells. Also expressed in epidermis, pharyngeal mucosa, mucosa of anterior esophagus, gill mucosa and cornea.

When phosphorylated, plays a role in filament reorganization. The sequence is that of Keratin, type I cytoskeletal 18 from Danio rerio (Zebrafish).